Here is a 383-residue protein sequence, read N- to C-terminus: Protein dyf-4 (383 aa).

The first 16 residues, M1 to A16, serve as a signal peptide directing secretion. N64 carries an N-linked (GlcNAc...) asparagine glycan.

In terms of assembly, interacts with daf-6. In terms of tissue distribution, expressed in sheath and socket glial cells in both the amphid and phasmid ciliated sensory neurons (at protein level).

Its subcellular location is the secreted. Required for the localization of daf-6 to the socket glial channel and the sheath lumen. In association with daf-6, plays a role in dendrite extension and ciliogenesis to ensure the formation of glial channels in amphid and phasmid ciliated sensory neurons. This chain is Protein dyf-4, found in Caenorhabditis elegans.